Consider the following 127-residue polypeptide: uncharacterized protein (127 aa).

2 helical membrane passes run 48 to 68 and 83 to 103; these read LYSL…PLSI and VFLF…CLID.

The protein resides in the membrane. This is an uncharacterized protein from Saccharomyces cerevisiae (strain ATCC 204508 / S288c) (Baker's yeast).